The primary structure comprises 447 residues: Argininosuccinate synthase (447 aa).

Residues Ala-17–Ser-25 and Ala-43 contribute to the ATP site. An L-citrulline-binding site is contributed by Tyr-99. The ATP site is built by Gly-129 and Thr-131. L-aspartate is bound by residues Thr-131, Asn-135, and Asp-136. Asn-135 contributes to the L-citrulline binding site. ATP is bound at residue Asp-136. Residues Arg-139 and Ser-192 each coordinate L-citrulline. An ATP-binding site is contributed by Asp-194. The L-citrulline site is built by Thr-201, Glu-203, and Glu-280.

It belongs to the argininosuccinate synthase family. Type 2 subfamily. As to quaternary structure, homotetramer.

Its subcellular location is the cytoplasm. The enzyme catalyses L-citrulline + L-aspartate + ATP = 2-(N(omega)-L-arginino)succinate + AMP + diphosphate + H(+). The protein operates within amino-acid biosynthesis; L-arginine biosynthesis; L-arginine from L-ornithine and carbamoyl phosphate: step 2/3. This Shigella boydii serotype 18 (strain CDC 3083-94 / BS512) protein is Argininosuccinate synthase.